A 488-amino-acid chain; its full sequence is Glutamyl-tRNA(Gln) amidotransferase subunit A (488 aa).

Catalysis depends on charge relay system residues Lys-77 and Ser-152. Catalysis depends on Ser-176, which acts as the Acyl-ester intermediate.

The protein belongs to the amidase family. GatA subfamily. In terms of assembly, heterotrimer of A, B and C subunits.

The enzyme catalyses L-glutamyl-tRNA(Gln) + L-glutamine + ATP + H2O = L-glutaminyl-tRNA(Gln) + L-glutamate + ADP + phosphate + H(+). Its function is as follows. Allows the formation of correctly charged Gln-tRNA(Gln) through the transamidation of misacylated Glu-tRNA(Gln) in organisms which lack glutaminyl-tRNA synthetase. The reaction takes place in the presence of glutamine and ATP through an activated gamma-phospho-Glu-tRNA(Gln). The sequence is that of Glutamyl-tRNA(Gln) amidotransferase subunit A from Streptococcus pyogenes serotype M3 (strain ATCC BAA-595 / MGAS315).